A 230-amino-acid polypeptide reads, in one-letter code: Fibrillarin-like rRNA/tRNA 2'-O-methyltransferase (230 aa).

S-adenosyl-L-methionine-binding positions include 87–88 (TT), 105–106 (EF), 130–131 (DA), and 150–153 (DVAQ).

This sequence belongs to the methyltransferase superfamily. Fibrillarin family. As to quaternary structure, interacts with nop5. Component of box C/D small ribonucleoprotein (sRNP) particles that contain rpl7ae, FlpA and nop5, plus a guide RNA.

Its function is as follows. Involved in pre-rRNA and tRNA processing. Utilizes the methyl donor S-adenosyl-L-methionine to catalyze the site-specific 2'-hydroxyl methylation of ribose moieties in rRNA and tRNA. Site specificity is provided by a guide RNA that base pairs with the substrate. Methylation occurs at a characteristic distance from the sequence involved in base pairing with the guide RNA. The protein is Fibrillarin-like rRNA/tRNA 2'-O-methyltransferase of Methanococcus vannielii (strain ATCC 35089 / DSM 1224 / JCM 13029 / OCM 148 / SB).